The primary structure comprises 150 residues: Dynein light chain Tctex-type protein 2B (150 aa).

The protein belongs to the dynein light chain Tctex-type family.

Its subcellular location is the dynein axonemal particle. In terms of biological role, acts as one of several non-catalytic accessory components of the cytoplasmic dynein 2 complex (dynein-2 complex), a motor protein complex that drives the movement of cargos along microtubules within cilia and flagella in concert with the intraflagellar transport (IFT) system. Required for proper retrograde ciliary transport. This chain is Dynein light chain Tctex-type protein 2B (dynlt2b), found in Danio rerio (Zebrafish).